A 113-amino-acid chain; its full sequence is Putative pterin-4-alpha-carbinolamine dehydratase (113 aa).

The protein belongs to the pterin-4-alpha-carbinolamine dehydratase family.

It carries out the reaction (4aS,6R)-4a-hydroxy-L-erythro-5,6,7,8-tetrahydrobiopterin = (6R)-L-erythro-6,7-dihydrobiopterin + H2O. This chain is Putative pterin-4-alpha-carbinolamine dehydratase, found in Nitrosomonas europaea (strain ATCC 19718 / CIP 103999 / KCTC 2705 / NBRC 14298).